We begin with the raw amino-acid sequence, 414 residues long: Esterase FrsA (414 aa).

This sequence belongs to the FrsA family.

It catalyses the reaction a carboxylic ester + H2O = an alcohol + a carboxylate + H(+). Catalyzes the hydrolysis of esters. This Escherichia coli O157:H7 protein is Esterase FrsA.